A 79-amino-acid polypeptide reads, in one-letter code: Protein GOLVEN 2 (79 aa).

The N-terminal stretch at 1-26 (MAIRVSHKSFLVALLLILFISSPTQA) is a signal peptide. Positions 27–65 (RSLREVVRNRTLLVVEKSQESRKIRHEGGGSDVDGLMDM) are excised as a propeptide. Positions 49–79 (KIRHEGGGSDVDGLMDMDYNSANKKRPIHNR) are disordered. At tyrosine 67 the chain carries Sulfotyrosine. Proline 75 is modified (hydroxyproline).

It belongs to the RGF family. Binds to LRR receptor-like serine/threonine-protein kinases to trigger their dimerization with SERK proteins and subsequent signaling. As to expression, expressed in siliques, stems, hypocotyls, shoot apex, leaves, flowers and cotyledons, and, to a lower extent, in roots.

It is found in the secreted. The protein resides in the endoplasmic reticulum. Its function is as follows. Signaling peptide (root growth factor) that regulates the pattern of root growth and lateral root development by modulating the length and the number of cortical cells in the root apical meristem (RAM), and the anticlinal asymmetric cell divisions in lateral root initiation cells. Also involved in the regulation of hypocotyl bending and root gravitropism, probably by influencing the formation of auxin gradients. Maintains the postembryonic root stem cell niche. The polypeptide is Protein GOLVEN 2 (Arabidopsis thaliana (Mouse-ear cress)).